Consider the following 586-residue polypeptide: Pyruvate kinase (586 aa).

Arginine 32 serves as a coordination point for substrate. K(+)-binding residues include asparagine 34, serine 36, aspartate 66, and threonine 67. Residue asparagine 34–histidine 37 coordinates ATP. Positions 73 and 156 each coordinate ATP. Glutamate 222 provides a ligand contact to Mg(2+). Positions 245, 246, and 278 each coordinate substrate. Residue aspartate 246 coordinates Mg(2+).

This sequence belongs to the pyruvate kinase family. In the C-terminal section; belongs to the PEP-utilizing enzyme family. As to quaternary structure, homotetramer. Mg(2+) serves as cofactor. Requires K(+) as cofactor.

It carries out the reaction pyruvate + ATP = phosphoenolpyruvate + ADP + H(+). It participates in carbohydrate degradation; glycolysis; pyruvate from D-glyceraldehyde 3-phosphate: step 5/5. This chain is Pyruvate kinase (pyk), found in Sporosarcina psychrophila (Bacillus psychrophilus).